Consider the following 604-residue polypeptide: Glutamine--fructose-6-phosphate aminotransferase [isomerizing] (604 aa).

The Nucleophile; for GATase activity role is filled by Cys2. Residues 2-218 form the Glutamine amidotransferase type-2 domain; sequence CGIVGVVGNR…DKELVILTKD (217 aa). 2 consecutive SIS domains span residues 284–423 and 452–594; these read IITS…ANGK and VAEK…VDKP. Lys599 serves as the catalytic For Fru-6P isomerization activity.

In terms of assembly, homodimer.

It is found in the cytoplasm. It carries out the reaction D-fructose 6-phosphate + L-glutamine = D-glucosamine 6-phosphate + L-glutamate. Catalyzes the first step in hexosamine metabolism, converting fructose-6P into glucosamine-6P using glutamine as a nitrogen source. The polypeptide is Glutamine--fructose-6-phosphate aminotransferase [isomerizing] (Streptococcus pyogenes serotype M3 (strain ATCC BAA-595 / MGAS315)).